A 333-amino-acid polypeptide reads, in one-letter code: Acetoin:2,6-dichlorophenolindophenol oxidoreductase subunit alpha (333 aa).

Tetramer of 2 alpha and 2 beta subunits. Thiamine diphosphate serves as cofactor.

The protein operates within ketone degradation; acetoin degradation. Its function is as follows. Catalyzes the 2,6-dichlorophenolindophenol-dependent cleavage of acetoin into acetate and acetaldehyde. The alpha subunit is probably the catalytic subunit of the enzyme. This Bacillus subtilis (strain 168) protein is Acetoin:2,6-dichlorophenolindophenol oxidoreductase subunit alpha (acoA).